Here is a 786-residue protein sequence, read N- to C-terminus: LPS-assembly protein LptD (786 aa).

Positions 1 to 24 (MKKRIPTLLATMIASALYSHQGLA) are cleaved as a signal peptide. Disulfide bonds link Cys31–Cys726 and Cys173–Cys727.

Belongs to the LptD family. In terms of assembly, component of the lipopolysaccharide transport and assembly complex. Interacts with LptE and LptA. In terms of processing, contains two intramolecular disulfide bonds.

It is found in the cell outer membrane. In terms of biological role, together with LptE, is involved in the assembly of lipopolysaccharide (LPS) at the surface of the outer membrane. This is LPS-assembly protein LptD from Salmonella choleraesuis (strain SC-B67).